A 309-amino-acid polypeptide reads, in one-letter code: MADLQATLDSIYADIQPRIGEGKVADYIPELAKVDPQQFGMAIVTVDGKVYRVGNADTAFSIQSISKVFMLTLALGKVGEGLWKRVGREPSGSAFNSIVQLEHESGIPRNPFINAGAIAVSDVVMAGHAPREAIGELLRFVRYLADDESITIDDKVARSETQTGYRNFALANFMRAYRNLDHPVDHVLGVYFHQCALSMSCEQLARAGLFLAARGSNPTTGHSVVSPKRARRINALMLTCGHYDGSGDFAYHVGLPGKSGVGGGIFAVAPGIASIAVWSPGLNKVGNSQLGAAALEMLAARTGWSVFGD.

S64, N114, E160, N167, Y191, Y243, and V261 together coordinate substrate.

This sequence belongs to the glutaminase family. Homotetramer.

It carries out the reaction L-glutamine + H2O = L-glutamate + NH4(+). This chain is Glutaminase, found in Rhizobium johnstonii (strain DSM 114642 / LMG 32736 / 3841) (Rhizobium leguminosarum bv. viciae).